A 258-amino-acid polypeptide reads, in one-letter code: C1q-related factor (258 aa).

The signal sequence occupies residues 1-16 (MLLVLVVLIPVLVSSG). The interval 39–117 (GPGAGARTDG…PGLPGAGGSG (79 aa)) is disordered. The span at 67-77 (GPQGKPGRTGK) shows a compositional bias: low complexity. Residues 67–115 (GPQGKPGRTGKPGPPGPPGDPGPPGPVGPPGEKGEPGKPGPPGLPGAGG) form the Collagen-like domain. Pro residues predominate over residues 78-95 (PGPPGPPGDPGPPGPVGP). The 134-residue stretch at 125–258 (TTVPRVAFYA…TFSGFIIYSD (134 aa)) folds into the C1q domain.

As to quaternary structure, interacts with ADGRB3. Forms heterooligomers with C1QL4, when proteins are coexpressed; this interaction does not occur after secretion. As to expression, expressed in brainstem.

It localises to the secreted. Functionally, may regulate the number of excitatory synapses that are formed on hippocampus neurons. Has no effect on inhibitory synapses. The protein is C1q-related factor (C1QL1) of Homo sapiens (Human).